Consider the following 315-residue polypeptide: tRNA dimethylallyltransferase (315 aa).

13–20 (GPTASGKT) is a binding site for ATP. 15–20 (TASGKT) is a binding site for substrate. Interaction with substrate tRNA stretches follow at residues 38–41 (DSAL), 162–166 (QRIQR), and 245–250 (RCVGYR).

It belongs to the IPP transferase family. Monomer. Mg(2+) serves as cofactor.

It catalyses the reaction adenosine(37) in tRNA + dimethylallyl diphosphate = N(6)-dimethylallyladenosine(37) in tRNA + diphosphate. Catalyzes the transfer of a dimethylallyl group onto the adenine at position 37 in tRNAs that read codons beginning with uridine, leading to the formation of N6-(dimethylallyl)adenosine (i(6)A). This is tRNA dimethylallyltransferase from Methylobacillus flagellatus (strain ATCC 51484 / DSM 6875 / VKM B-1610 / KT).